We begin with the raw amino-acid sequence, 60 residues long: Cytotoxin 3 (60 aa).

Cystine bridges form between C3–C21, C14–C38, C42–C53, and C54–C59.

Belongs to the three-finger toxin family. Short-chain subfamily. Type IA cytotoxin sub-subfamily. Monomer in solution; Homodimer and oligomer in the presence of negatively charged lipids forming a pore with a size ranging between 20 and 30 Angstroms. Expressed by the venom gland.

The protein localises to the secreted. Its subcellular location is the target cell membrane. Its function is as follows. Shows cytolytic activity on many different cells by forming pore in lipid membranes. In vivo, increases heart rate or kills the animal by cardiac arrest. In addition, it binds to heparin with high affinity, interacts with Kv channel-interacting protein 1 (KCNIP1) in a calcium-independent manner, and binds to integrin alpha-V/beta-3 (ITGAV/ITGB3) with moderate affinity. In Naja naja (Indian cobra), this protein is Cytotoxin 3.